The sequence spans 41 residues: Perlinhibin (41 aa).

Post-translationally, contains four disulfide bonds.

Its function is as follows. Binds to calcite crystals in the shell and inhibits further shell growth at the binding site. This Haliotis laevigata (Smooth Australian abalone) protein is Perlinhibin.